Here is a 484-residue protein sequence, read N- to C-terminus: Glutamate--tRNA ligase (484 aa).

A 'HIGH' region motif is present at residues 11 to 21 (PSPTGLLHIGN). Positions 255-259 (KLSKR) match the 'KMSKS' region motif. Position 258 (Lys-258) interacts with ATP.

This sequence belongs to the class-I aminoacyl-tRNA synthetase family. Glutamate--tRNA ligase type 1 subfamily. In terms of assembly, monomer.

It localises to the cytoplasm. The catalysed reaction is tRNA(Glu) + L-glutamate + ATP = L-glutamyl-tRNA(Glu) + AMP + diphosphate. Its function is as follows. Catalyzes the attachment of glutamate to tRNA(Glu) in a two-step reaction: glutamate is first activated by ATP to form Glu-AMP and then transferred to the acceptor end of tRNA(Glu). This chain is Glutamate--tRNA ligase, found in Streptococcus thermophilus (strain CNRZ 1066).